The following is a 352-amino-acid chain: Photosystem II D2 protein (352 aa).

A helical transmembrane segment spans residues 40-60 (CAYMALGGWLTGTTFVTSWYT). Residue H117 participates in chlorophyll a binding. Residues 124–140 (GFMLRQFEIARLVGIRP) form a helical membrane-spanning segment. Positions 129 and 142 each coordinate pheophytin a. The helical transmembrane segment at 152-165 (VFVSVFLMYPLGQS) threads the bilayer. H197 lines the chlorophyll a pocket. Residues 207–227 (GALLCAIHGATVENTLFEDGD) traverse the membrane as a helical segment. A plastoquinone is bound by residues H214 and F261. Fe cation is bound at residue H214. Residue H268 coordinates Fe cation. A helical membrane pass occupies residues 278–294 (GLWTSSIGIIGLALNLR).

Belongs to the reaction center PufL/M/PsbA/D family. As to quaternary structure, PSII is composed of 1 copy each of membrane proteins PsbA, PsbB, PsbC, PsbD, PsbE, PsbF, PsbH, PsbI, PsbJ, PsbK, PsbL, PsbM, PsbT, PsbX, PsbY, PsbZ, Psb30/Ycf12, peripheral proteins PsbO, CyanoQ (PsbQ), PsbU, PsbV and a large number of cofactors. It forms dimeric complexes. The D1/D2 heterodimer binds P680, chlorophylls that are the primary electron donor of PSII, and subsequent electron acceptors. It shares a non-heme iron and each subunit binds pheophytin, quinone, additional chlorophylls, carotenoids and lipids. There is also a Cl(-1) ion associated with D1 and D2, which is required for oxygen evolution. The PSII complex binds additional chlorophylls, carotenoids and specific lipids. serves as cofactor.

The protein localises to the cellular thylakoid membrane. It catalyses the reaction 2 a plastoquinone + 4 hnu + 2 H2O = 2 a plastoquinol + O2. Photosystem II (PSII) is a light-driven water:plastoquinone oxidoreductase that uses light energy to abstract electrons from H(2)O, generating O(2) and a proton gradient subsequently used for ATP formation. It consists of a core antenna complex that captures photons, and an electron transfer chain that converts photonic excitation into a charge separation. The D1/D2 (PsbA/PsbD) reaction center heterodimer binds P680, the primary electron donor of PSII as well as several subsequent electron acceptors. D2 is needed for assembly of a stable PSII complex. This is Photosystem II D2 protein from Synechococcus sp. (strain RCC307).